The chain runs to 102 residues: Large ribosomal subunit protein bL21 (102 aa).

The span at 79–91 shows a compositional bias: basic residues; the sequence is RKDSKRKKGHRQP. The disordered stretch occupies residues 79 to 102; it reads RKDSKRKKGHRQPYTKLTIDKINA.

It belongs to the bacterial ribosomal protein bL21 family. Part of the 50S ribosomal subunit. Contacts protein L20.

This protein binds to 23S rRNA in the presence of protein L20. This is Large ribosomal subunit protein bL21 from Staphylococcus carnosus (strain TM300).